The chain runs to 424 residues: Histidine--tRNA ligase (424 aa).

This sequence belongs to the class-II aminoacyl-tRNA synthetase family. Homodimer.

It localises to the cytoplasm. It carries out the reaction tRNA(His) + L-histidine + ATP = L-histidyl-tRNA(His) + AMP + diphosphate + H(+). This chain is Histidine--tRNA ligase, found in Francisella philomiragia subsp. philomiragia (strain ATCC 25017 / CCUG 19701 / FSC 153 / O#319-036).